The primary structure comprises 205 residues: Probable GTP-binding protein EngB (205 aa).

One can recognise an EngB-type G domain in the interval 22–194; that stretch reads ELPEIAFAGR…WESILDLCEI (173 aa). Residues 30 to 37, 57 to 61, 75 to 78, 142 to 145, and 173 to 175 each bind GTP; these read GRSNVGKS, GRTQL, DLPG, TKAD, and FSA. Mg(2+) is bound by residues Ser37 and Thr59.

The protein belongs to the TRAFAC class TrmE-Era-EngA-EngB-Septin-like GTPase superfamily. EngB GTPase family. Mg(2+) serves as cofactor.

In terms of biological role, necessary for normal cell division and for the maintenance of normal septation. This Desulfatibacillum aliphaticivorans protein is Probable GTP-binding protein EngB.